Consider the following 173-residue polypeptide: Ribosome maturation factor RimP (173 aa).

Belongs to the RimP family.

It localises to the cytoplasm. In terms of biological role, required for maturation of 30S ribosomal subunits. In Pelodictyon phaeoclathratiforme (strain DSM 5477 / BU-1), this protein is Ribosome maturation factor RimP.